The chain runs to 587 residues: MMSSSYWSETSSSSCGTQQPTEVLQCQPQHYHYYHQPSQAQQPPEKNVVYERVRTYSGPMNKVVQALDPLGSREVLSPLKPASSYQSLVWSDHSQELYSPTLKISTCAPSTLHITQNAEQELHSPTVKVTTYPQTTIRRYIVQNPEQEPLSPFLRGSQFFPGNNVIYEKTIRKVEKLNTDQECCPQIQCHHHVIQQPQIIHSPHCQQSHSSHQIQCITENDSNIGHELCHGGPSQIHEQVIIQDDGPEKLDPKYFGELLADLSRKNTDLYHCLLEHLERIGGSKQDFESTDTSEDIESLIPKGLSEFTKQQIRYILQMRGMSDKSLRLVLSTFSNIREELGHLQNDLTSLENDKIRLEKDLAFKENQMKEYEELLASVRANNRQQQQGLQDSSAKCQSLEENNLSLRHTLSDLEYRLKELEYCKRNLEQENKNLRIQVSETCTGPTLQAKMDEIGNHYMEMVKNLRLDKDREISKLRSQLNQYQKDVSKREGSCSDFQFKLHELTSLLEEKDSLIKRQSEELSKLRQEIYSSHNQPSCGGRTTITTKKYRTQYPILGLLYDDYEYIPPGSDTQTIVIEKTEDKWTCP.

A coiled-coil region spans residues 331–529 (STFSNIREEL…EELSKLRQEI (199 aa)).

As to quaternary structure, interacts with nonmuscle actin. Expression absent in adult ovary.

The protein resides in the cell junction. It is found in the tight junction. Functionally, plays a key role in the organization of epithelial monolayers by regulating the actin cytoskeleton. May be involved in ovary development. The protein is Protein POF1B (Pof1b) of Mus musculus (Mouse).